The primary structure comprises 569 residues: Urease subunit alpha (569 aa).

The region spanning 131–569 (GGVDAHIHFI…VAMAQRYFLF (439 aa)) is the Urease domain. His136, His138, and Lys219 together coordinate Ni(2+). Lys219 carries the N6-carboxylysine modification. His221 is a substrate binding site. Ni(2+) is bound by residues His248 and His274. Catalysis depends on His322, which acts as the Proton donor. Asp362 is a binding site for Ni(2+).

This sequence belongs to the metallo-dependent hydrolases superfamily. Urease alpha subunit family. In terms of assembly, heterotrimer of UreA (gamma), UreB (beta) and UreC (alpha) subunits. Three heterotrimers associate to form the active enzyme. Ni cation is required as a cofactor. Carboxylation allows a single lysine to coordinate two nickel ions.

It is found in the cytoplasm. It catalyses the reaction urea + 2 H2O + H(+) = hydrogencarbonate + 2 NH4(+). The protein operates within nitrogen metabolism; urea degradation; CO(2) and NH(3) from urea (urease route): step 1/1. This Geobacillus kaustophilus (strain HTA426) protein is Urease subunit alpha.